A 462-amino-acid chain; its full sequence is Argininosuccinate lyase (462 aa).

This sequence belongs to the lyase 1 family. Argininosuccinate lyase subfamily.

It is found in the cytoplasm. The catalysed reaction is 2-(N(omega)-L-arginino)succinate = fumarate + L-arginine. The protein operates within amino-acid biosynthesis; L-arginine biosynthesis; L-arginine from L-ornithine and carbamoyl phosphate: step 3/3. This is Argininosuccinate lyase from Prochlorococcus marinus (strain SARG / CCMP1375 / SS120).